The primary structure comprises 255 residues: Thiazole synthase (255 aa).

The active-site Schiff-base intermediate with DXP is Lys96. 1-deoxy-D-xylulose 5-phosphate-binding positions include Gly157, 183–184 (AG), and 205–206 (NT).

This sequence belongs to the ThiG family. In terms of assembly, homotetramer. Forms heterodimers with either ThiH or ThiS.

It localises to the cytoplasm. It carries out the reaction [ThiS sulfur-carrier protein]-C-terminal-Gly-aminoethanethioate + 2-iminoacetate + 1-deoxy-D-xylulose 5-phosphate = [ThiS sulfur-carrier protein]-C-terminal Gly-Gly + 2-[(2R,5Z)-2-carboxy-4-methylthiazol-5(2H)-ylidene]ethyl phosphate + 2 H2O + H(+). It participates in cofactor biosynthesis; thiamine diphosphate biosynthesis. Its function is as follows. Catalyzes the rearrangement of 1-deoxy-D-xylulose 5-phosphate (DXP) to produce the thiazole phosphate moiety of thiamine. Sulfur is provided by the thiocarboxylate moiety of the carrier protein ThiS. In vitro, sulfur can be provided by H(2)S. In Staphylococcus haemolyticus (strain JCSC1435), this protein is Thiazole synthase.